Consider the following 261-residue polypeptide: Chanoclavine-I dehydrogenase easD (261 aa).

Positions Met-1 to Ala-20 are cleaved as a signal peptide. NADP(+) is bound at residue Ile-18. N-linked (GlcNAc...) asparagine glycosylation is present at Asn-43. 5 residues coordinate NADP(+): Asp-66, Arg-132, Tyr-166, Lys-170, and Thr-201. Tyr-166 acts as the Proton donor in catalysis. Lys-170 (lowers pKa of active site Tyr) is an active-site residue.

It belongs to the short-chain dehydrogenases/reductases (SDR) family. As to quaternary structure, homotetramer.

It catalyses the reaction chanoclavine-I + NAD(+) = chanoclavine-I aldehyde + NADH + H(+). It functions in the pathway alkaloid biosynthesis; ergot alkaloid biosynthesis. Chanoclavine-I dehydrogenase; part of the gene cluster that mediates the biosynthesis of fungal ergot alkaloid. DmaW catalyzes the first step of ergot alkaloid biosynthesis by condensing dimethylallyl diphosphate (DMAP) and tryptophan to form 4-dimethylallyl-L-tryptophan. The second step is catalyzed by the methyltransferase easF that methylates 4-dimethylallyl-L-tryptophan in the presence of S-adenosyl-L-methionine, resulting in the formation of 4-dimethylallyl-L-abrine. The catalase easC and the FAD-dependent oxidoreductase easE then transform 4-dimethylallyl-L-abrine to chanoclavine-I which is further oxidized by easD in the presence of NAD(+), resulting in the formation of chanoclavine-I aldehyde. Agroclavine dehydrogenase easG then mediates the conversion of chanoclavine-I aldehyde to agroclavine via a non-enzymatic adduct reaction: the substrate is an iminium intermediate that is formed spontaneously from chanoclavine-I aldehyde in the presence of glutathione. The presence of easA is not required to complete this reaction. Further conversion of agroclavine to paspalic acid is a two-step process involving oxidation of agroclavine to elymoclavine and of elymoclavine to paspalic acid, the second step being performed by the elymoclavine oxidase cloA. Paspalic acid is then further converted to D-lysergic acid. Ergopeptines are assembled from D-lysergic acid and three different amino acids by the D-lysergyl-peptide-synthetases composed each of a monomudular and a trimodular nonribosomal peptide synthetase subunit. LpsB and lpsC encode the monomodular subunits responsible for D-lysergic acid activation and incorporation into the ergopeptine backbone. LpsA1 and A2 subunits encode the trimodular nonribosomal peptide synthetase assembling the tripeptide portion of ergopeptines. LpsA1 is responsible for formation of the major ergopeptine, ergotamine, and lpsA2 for alpha-ergocryptine, the minor ergopeptine of the total alkaloid mixture elaborated by C.purpurea. D-lysergyl-tripeptides are assembled by the nonribosomal peptide synthetases and released as N-(D-lysergyl-aminoacyl)-lactams. Cyclolization of the D-lysergyl-tripeptides is performed by the Fe(2+)/2-ketoglutarate-dependent dioxygenase easH which introduces a hydroxyl group into N-(D-lysergyl-aminoacyl)-lactam at alpha-C of the aminoacyl residue followed by spontaneous condensation with the terminal lactam carbonyl group. The polypeptide is Chanoclavine-I dehydrogenase easD (Claviceps purpurea (Ergot fungus)).